Reading from the N-terminus, the 311-residue chain is Heme A synthase (311 aa).

At 1 to 6 (MQRFIK) the chain is on the cytoplasmic side. The chain crosses the membrane as a helical span at residues 7–27 (WLAVITSLDLLVVLLGGALVT). The Extracellular portion of the chain corresponds to 28 to 62 (KTGSGQGCGKSWPLCNGEFVPSNLSMETIIELSHR). Cys35 and Cys42 are oxidised to a cystine. Glu58 is an active-site residue. His61 is a binding site for heme o. A helical transmembrane segment spans residues 63 to 83 (LTSGSAGILVTLLCILSWKYY). Over 84-91 (KHVRETKT) the chain is Cytoplasmic. The chain crosses the membrane as a helical span at residues 92-112 (LAILSFVFLVAQALMGAAAVV). Over 113–121 (WGQMPAVLA) the chain is Extracellular. A helical membrane pass occupies residues 122–142 (IHFGISLISFASVILLTCLIF). His123 provides a ligand contact to heme o. Residues 143–159 (EIDQKFDARSLIMDKKM) lie on the Cytoplasmic side of the membrane. Residues 160-180 (KFHIYGVTIYSYIVVYTGALV) form a helical membrane-spanning segment. Over 181-211 (RHERATLACPDFPLCSKSRPMPTQLHEWVQM) the chain is Extracellular. Cysteines 189 and 195 form a disulfide. The chain crosses the membrane as a helical span at residues 212–232 (GHRVAAMLIFAWILYAMIIAI). His213 provides a ligand contact to heme b. The Cytoplasmic segment spans residues 233-243 (RHYKQQRVVYW). A helical membrane pass occupies residues 244-264 (GWIISFILVTLQAIVGILVVF). Topologically, residues 265-271 (TNASLAM) are extracellular. A helical membrane pass occupies residues 272-292 (ALLHSLFISCLFAVLCYLVMI). His275 serves as a coordination point for heme b. Residues 293–311 (GTRSTVNAKETESTSKQTK) lie on the Cytoplasmic side of the membrane.

The protein belongs to the COX15/CtaA family. Type 1 subfamily. Interacts with CtaB. Heme b serves as cofactor.

The protein resides in the cell membrane. The enzyme catalyses Fe(II)-heme o + 2 A + H2O = Fe(II)-heme a + 2 AH2. It participates in porphyrin-containing compound metabolism; heme A biosynthesis; heme A from heme O: step 1/1. Catalyzes the conversion of heme O to heme A by two successive hydroxylations of the methyl group at C8. The first hydroxylation forms heme I, the second hydroxylation results in an unstable dihydroxymethyl group, which spontaneously dehydrates, resulting in the formyl group of heme A. The polypeptide is Heme A synthase (Bacillus mycoides (strain KBAB4) (Bacillus weihenstephanensis)).